The chain runs to 78 residues: Putative defensin-like protein 288 (78 aa).

The signal sequence occupies residues 1–21 (MSNLRLTIAVFLAALFQTLWW).

Belongs to the DEFL family.

It is found in the secreted. The polypeptide is Putative defensin-like protein 288 (Arabidopsis thaliana (Mouse-ear cress)).